The primary structure comprises 117 residues: MQRFMMKSKIHRAIVTDANLNYQGSITIDKNLMELADILPNEKVQVLNINNGARFDTYAIEGERGSGTICINGAAARLCQVGDIIIIISYAIMDDEEAKNYKPKVIFVDENNKPVNM.

S25 acts as the Schiff-base intermediate with substrate; via pyruvic acid in catalysis. S25 bears the Pyruvic acid (Ser) mark. Substrate is bound at residue T57. Y58 acts as the Proton donor in catalysis. 73 to 75 (GAA) provides a ligand contact to substrate.

It belongs to the PanD family. As to quaternary structure, heterooctamer of four alpha and four beta subunits. Requires pyruvate as cofactor. Is synthesized initially as an inactive proenzyme, which is activated by self-cleavage at a specific serine bond to produce a beta-subunit with a hydroxyl group at its C-terminus and an alpha-subunit with a pyruvoyl group at its N-terminus.

It localises to the cytoplasm. It carries out the reaction L-aspartate + H(+) = beta-alanine + CO2. Its pathway is cofactor biosynthesis; (R)-pantothenate biosynthesis; beta-alanine from L-aspartate: step 1/1. Functionally, catalyzes the pyruvoyl-dependent decarboxylation of aspartate to produce beta-alanine. This is Aspartate 1-decarboxylase from Thermoanaerobacter pseudethanolicus (strain ATCC 33223 / 39E) (Clostridium thermohydrosulfuricum).